The primary structure comprises 55 residues: Large ribosomal subunit protein bL33 (55 aa).

Belongs to the bacterial ribosomal protein bL33 family.

The polypeptide is Large ribosomal subunit protein bL33 (Jannaschia sp. (strain CCS1)).